A 406-amino-acid chain; its full sequence is Probable 26S proteasome regulatory subunit 10B (406 aa).

191–198 contacts ATP; sequence GPPGTGKT.

It belongs to the AAA ATPase family.

It localises to the cytoplasm. It is found in the nucleus. Functionally, the 26S proteasome is involved in the ATP-dependent degradation of ubiquitinated proteins. The regulatory (or ATPase) complex confers ATP dependency and substrate specificity to the 26S complex. This chain is Probable 26S proteasome regulatory subunit 10B (rpt-4), found in Caenorhabditis elegans.